The primary structure comprises 243 residues: Alanyl-tRNA editing protein AlaX-M (243 aa).

Zn(2+) contacts are provided by H105, H109, C208, and H212.

Belongs to the class-II aminoacyl-tRNA synthetase family. Editing domain AlaX-M subfamily. It depends on Zn(2+) as a cofactor.

The protein resides in the cytoplasm. In terms of biological role, functions in trans to edit the amino acid moiety from incorrectly charged Ser-tRNA(Ala) or Gly-tRNA(Ala). Has no activity on incorrectly charged Ser-tRNA(Thr), nor on correctly charged Ala-tRNA(Ala) or Ser-tRNA(Ser). The protein is Alanyl-tRNA editing protein AlaX-M (alaXM) of Methanosarcina barkeri (strain Fusaro / DSM 804).